A 418-amino-acid chain; its full sequence is Histidine--tRNA ligase (418 aa).

It belongs to the class-II aminoacyl-tRNA synthetase family.

It is found in the cytoplasm. The enzyme catalyses tRNA(His) + L-histidine + ATP = L-histidyl-tRNA(His) + AMP + diphosphate + H(+). This Methanococcus maripaludis (strain C7 / ATCC BAA-1331) protein is Histidine--tRNA ligase.